The primary structure comprises 335 residues: Glycerol-3-phosphate dehydrogenase [NAD(P)+] (335 aa).

4 residues coordinate NADPH: Ser10, Phe11, Arg31, and Lys105. Positions 105, 136, and 138 each coordinate sn-glycerol 3-phosphate. An NADPH-binding site is contributed by Ala140. The sn-glycerol 3-phosphate site is built by Lys191, Asp244, Ser254, Arg255, and Asn256. Lys191 serves as the catalytic Proton acceptor. Position 255 (Arg255) interacts with NADPH. NADPH is bound by residues Val279 and Glu281.

Belongs to the NAD-dependent glycerol-3-phosphate dehydrogenase family.

Its subcellular location is the cytoplasm. The enzyme catalyses sn-glycerol 3-phosphate + NAD(+) = dihydroxyacetone phosphate + NADH + H(+). It carries out the reaction sn-glycerol 3-phosphate + NADP(+) = dihydroxyacetone phosphate + NADPH + H(+). The protein operates within membrane lipid metabolism; glycerophospholipid metabolism. In terms of biological role, catalyzes the reduction of the glycolytic intermediate dihydroxyacetone phosphate (DHAP) to sn-glycerol 3-phosphate (G3P), the key precursor for phospholipid synthesis. The sequence is that of Glycerol-3-phosphate dehydrogenase [NAD(P)+] from Myxococcus xanthus (strain DK1622).